A 394-amino-acid chain; its full sequence is Venom metalloproteinase antarease-like TtrivMP_A (394 aa).

The first 16 residues, 1 to 16, serve as a signal peptide directing secretion; it reads MISYLASIFLLATVSA. Positions 17–158 are excised as a propeptide; sequence VPSGRVEVVF…AENVSRMAEE (142 aa). Asparagine 151 is a glycosylation site (N-linked (GlcNAc...) asparagine). The 229-residue stretch at 162–390 folds into the Peptidase M12B domain; that stretch reads IVVEYYIVTD…KPTAFCIFEQ (229 aa). A disulfide bond links cysteine 295 and cysteine 386. Histidine 319 contributes to the Zn(2+) binding site. The active site involves glutamate 320. Zn(2+)-binding residues include histidine 323 and histidine 329.

The protein belongs to the venom metalloproteinase (M12B) family. Requires Zn(2+) as cofactor. Expressed by the venom gland.

The protein localises to the secreted. Inhibited by EDTA. Functionally, acts as a metalloprotease. Penetrates intact tissue and specifically cleaves the vesicle-associated membrane protein 2 (VAMP2) (part of the SNARE complex) involved in pancreatic secretion, thus disrupting the normal vesicular traffic. The polypeptide is Venom metalloproteinase antarease-like TtrivMP_A (Tityus trivittatus (Argentinean scorpion)).